Reading from the N-terminus, the 419-residue chain is uncharacterized protein (419 aa).

Transmembrane regions (helical) follow at residues 5 to 25 (MIIV…ALII), 26 to 46 (AAGV…AQQI), 53 to 73 (FPML…GGEL), 102 to 122 (VFGG…SVLI), 144 to 164 (VIDV…VSGV), 170 to 190 (FVAG…VCWF), 210 to 230 (ATLA…ILFL), 234 to 254 (LATP…LSLL), 274 to 294 (ATGV…VLTF), 309 to 329 (ISSP…VGMP), 332 to 352 (MPPA…TIGL), 360 to 380 (MMVI…TLFI), and 396 to 416 (LWPF…IPAL).

This sequence belongs to the YiaN/YgiK family.

The protein resides in the cell inner membrane. This is an uncharacterized protein from Sinorhizobium fredii (strain NBRC 101917 / NGR234).